A 1363-amino-acid polypeptide reads, in one-letter code: Tonsoku-like protein (1363 aa).

TPR repeat units follow at residues 27–60 (AAYCHQLGELLASHGRFKDALEEHQQELHLLESV), 67–100 (AVAHRKIGERLAEMENYSAALKHQHLYLDLAGSL), 107–147 (QRAW…VDEK), 162–195 (TRLYLNLGLTCESLQQTALCNNYFKKSIFLAEQN), 202–235 (FRARYNLGAIHWRGGQHSQAMRCLEGARECARAM), 242–275 (SECCVLVSQVLQDLGDFLAAKRALKKAYRLGSQK), 311–344 (MAICEQLGDLFSKAGDFPKAAEAYQKQLHLAELL), and 352–385 (AVIHVSLATTLGDMKDHRKAVHHYEEELRLRKGN). The tract at residues 460 to 511 (SMAKDTEEEEEEEEEEEEEASEAPETSELELSESEDDADGLSQQLEEDEELQ) is disordered. The segment covering 465–510 (TEEEEEEEEEEEEEASEAPETSELELSESEDDADGLSQQLEEDEEL) has biased composition (acidic residues). 3 ANK repeats span residues 528–557 (MGETLLHRACIEGQLRRVQDLVKQGHPLNP), 561–590 (CGWTPLHEACNYGHLEIVRFLLDHGAAVDD), and 597–626 (DGITPLHDALNCGHFEVAELLIERGASVTL). A disordered region spans residues 662–786 (ERLQMASSGQ…KSRETATSSA (125 aa)). Residues 666–684 (MASSGQASRSSPALQTIPS) show a composition bias toward polar residues. The span at 692-713 (TSPPSSPCPEPSSYTPRPPEAS) shows a compositional bias: pro residues. Residues 771-780 (KIPDPPKSRE) show a composition bias toward basic and acidic residues. Residue arginine 796 is modified to Omega-N-methylarginine. 2 disordered regions span residues 841 to 866 (PLTRSGRPSTSVSDYERCPARPRTRV) and 883 to 909 (AGDGSLNAEPAENPSVPRTSGPNKENY). Residues 842 to 853 (LTRSGRPSTSVS) are compositionally biased toward polar residues. LRR repeat units lie at residues 1060-1081 (ALRELRLAGNRLGDACATELLA), 1088-1108 (NLVLLDLSSNHLGQEGLRQLV), 1119-1140 (NLEELDLSMNPLGDGCGQALAS), 1147-1168 (MLSTLRLQACGFSSSFFLSHQA), 1179-1199 (HLKTLSLSYNLLGAPALARVL), 1206-1214 (TLKRLDLSS), 1238-1261 (ALAHLTLSANCLGDKAVRELSRCL), 1266-1287 (SLTSLDLSANPEVSCASLEELL), 1296-1317 (GLSFLGLSGCSIQGPLNSDLWD), and 1322-1343 (QLQELQLCTKDLSTKDRDSVCQ).

Belongs to the Tonsoku family. In terms of assembly, component of the MMS22L-TONSL complex, a complex at least composed of MMS22L and TONSL/NFKBIL2. Interacts with the MCM complex, the FACT complex and the RPA complex. Interacts with MCM5; the interaction is direct. Binds histones, with a strong preference for histone H3.1 (histones H3.1 and H3-4/H3.1t). Interacts (via ANK repeats) with histone H4; specifically binds histone H4 lacking methylation at 'Lys-20' (H4K20me0). May interact with DNAJC9; the interaction seems to be histone-dependent.

The protein localises to the nucleus. Its subcellular location is the chromosome. It localises to the cytoplasm. Functionally, component of the MMS22L-TONSL complex, a complex that promotes homologous recombination-mediated repair of double-strand breaks (DSBs) at stalled or collapsed replication forks. The MMS22L-TONSL complex is required to maintain genome integrity during DNA replication. It mediates the assembly of RAD51 filaments on single-stranded DNA (ssDNA): the MMS22L-TONSL complex is recruited to DSBs following histone replacement by histone chaperones and eviction of the replication protein A complex (RPA/RP-A) from DSBs. Following recruitment to DSBs, the TONSL-MMS22L complex promotes recruitment of RAD51 filaments and subsequent homologous recombination. Within the complex, TONSL acts as a histone reader, which recognizes and binds newly synthesized histones following their replacement by histone chaperones. Specifically binds histone H4 lacking methylation at 'Lys-20' (H4K20me0) and histone H3.1. The sequence is that of Tonsoku-like protein from Mus musculus (Mouse).